Here is a 98-residue protein sequence, read N- to C-terminus: Large ribosomal subunit protein uL23 (98 aa).

Belongs to the universal ribosomal protein uL23 family. In terms of assembly, part of the 50S ribosomal subunit. Contacts protein L29, and trigger factor when it is bound to the ribosome.

Its function is as follows. One of the early assembly proteins it binds 23S rRNA. One of the proteins that surrounds the polypeptide exit tunnel on the outside of the ribosome. Forms the main docking site for trigger factor binding to the ribosome. The chain is Large ribosomal subunit protein uL23 from Legionella pneumophila (strain Paris).